We begin with the raw amino-acid sequence, 673 residues long: DNA ligase (673 aa).

NAD(+)-binding positions include 33-37, 82-83, and Glu113; these read DYEYD and SL. Lys115 (N6-AMP-lysine intermediate) is an active-site residue. Positions 136, 170, 285, and 309 each coordinate NAD(+). Residues Cys403, Cys406, Cys421, and Cys426 each contribute to the Zn(2+) site. Residues 583-672 form the BRCT domain; the sequence is AKSDILKGYT…SREEAEKILM (90 aa).

It belongs to the NAD-dependent DNA ligase family. LigA subfamily. Mg(2+) is required as a cofactor. Requires Mn(2+) as cofactor.

It carries out the reaction NAD(+) + (deoxyribonucleotide)n-3'-hydroxyl + 5'-phospho-(deoxyribonucleotide)m = (deoxyribonucleotide)n+m + AMP + beta-nicotinamide D-nucleotide.. Functionally, DNA ligase that catalyzes the formation of phosphodiester linkages between 5'-phosphoryl and 3'-hydroxyl groups in double-stranded DNA using NAD as a coenzyme and as the energy source for the reaction. It is essential for DNA replication and repair of damaged DNA. The chain is DNA ligase from Caldicellulosiruptor bescii (strain ATCC BAA-1888 / DSM 6725 / KCTC 15123 / Z-1320) (Anaerocellum thermophilum).